Consider the following 239-residue polypeptide: Large ribosomal subunit protein bL25 (239 aa).

The interval 211–239 (KGKKDKEDEEAEKGTSVASPTTATGGTKK) is disordered. The segment covering 226–239 (SVASPTTATGGTKK) has biased composition (polar residues).

The protein belongs to the bacterial ribosomal protein bL25 family. CTC subfamily. Part of the 50S ribosomal subunit; part of the 5S rRNA/L5/L18/L25 subcomplex. Contacts the 5S rRNA. Binds to the 5S rRNA independently of L5 and L18.

This is one of the proteins that binds to the 5S RNA in the ribosome where it forms part of the central protuberance. This Endomicrobium trichonymphae protein is Large ribosomal subunit protein bL25.